The primary structure comprises 450 residues: MTKHYDYIAIGGGSGGIASINRAAMYGQKCALIEAKELGGTCVNVGCVPKKVMWHAAQIREAIHMYGPDYGFDTTINKFNWETLIASRTAYIDRIHTSYENVLGKNNVDVIKGFARFVDAKTLEVNGETITADHILIATGGRPSHPDIPGVEYGIDSDGFFALPALPERVAVVGAGYIAVELAGVINGLGAKTHLFVRKHAPLRSFDPMISETLVEVMNAEGPQLHTNAIPKAVVKNTDGSLTLELEDGRSETVDCLIWAIGREPANDNINLEAAGVKTNEKGYIVVDKYQNTNIEGIYAVGDNTGAVELTPVAVAAGRRLSERLFNNKPDEHLDYSNIPTVVFSHPPIGTVGLTEPQAREQYGDDQVKVYKSSFTAMYTAVTTHRQPCRMKLVCVGSEEKIVGIHGIGFGMDEMLQGFAVALKMGATKKDFDNTVAIHPTAAEEFVTMR.

S14, G15, E34, T41, C42, and K50 together coordinate FAD. Residue S14 coordinates glutathione. A disulfide bridge links C42 with C47. Y99 contacts glutathione. An FAD-binding site is contributed by A115. Positions 175, 178, 181, 198, 204, and 262 each coordinate NADP(+). D303 lines the FAD pocket. Position 309 (E309) interacts with NADP(+). T311 provides a ligand contact to FAD. A glutathione-binding site is contributed by R319. Residue V342 coordinates NADP(+). H439 is a binding site for FAD. Catalysis depends on H439, which acts as the Proton acceptor.

It belongs to the class-I pyridine nucleotide-disulfide oxidoreductase family. In terms of assembly, homodimer. FAD is required as a cofactor.

The protein resides in the cytoplasm. The enzyme catalyses 2 glutathione + NADP(+) = glutathione disulfide + NADPH + H(+). In terms of biological role, catalyzes the reduction of glutathione disulfide (GSSG) to reduced glutathione (GSH). Constitutes the major mechanism to maintain a high GSH:GSSG ratio in the cytosol. This Escherichia coli (strain K12) protein is Glutathione reductase (gor).